A 307-amino-acid polypeptide reads, in one-letter code: Glutaminase (307 aa).

Residues serine 66, asparagine 116, glutamate 160, asparagine 167, tyrosine 191, tyrosine 243, and valine 261 each coordinate substrate.

It belongs to the glutaminase family. In terms of assembly, homotetramer.

It carries out the reaction L-glutamine + H2O = L-glutamate + NH4(+). This is Glutaminase from Saccharophagus degradans (strain 2-40 / ATCC 43961 / DSM 17024).